The following is a 739-amino-acid chain: Phosphoribosylformylglycinamidine synthase subunit PurL (739 aa).

Residue His-54 is part of the active site. The ATP site is built by Tyr-57 and Lys-96. A Mg(2+)-binding site is contributed by Glu-98. Substrate contacts are provided by residues 99 to 102 and Arg-121; that span reads SHNH. His-100 acts as the Proton acceptor in catalysis. Asp-122 serves as a coordination point for Mg(2+). Gln-245 contributes to the substrate binding site. Asp-275 is a binding site for Mg(2+). A substrate-binding site is contributed by 319 to 321; it reads ESQ. Asp-504 and Gly-541 together coordinate ATP. Asn-542 contacts Mg(2+). Residue Ser-544 coordinates substrate.

This sequence belongs to the FGAMS family. As to quaternary structure, monomer. Part of the FGAM synthase complex composed of 1 PurL, 1 PurQ and 2 PurS subunits.

Its subcellular location is the cytoplasm. It carries out the reaction N(2)-formyl-N(1)-(5-phospho-beta-D-ribosyl)glycinamide + L-glutamine + ATP + H2O = 2-formamido-N(1)-(5-O-phospho-beta-D-ribosyl)acetamidine + L-glutamate + ADP + phosphate + H(+). It functions in the pathway purine metabolism; IMP biosynthesis via de novo pathway; 5-amino-1-(5-phospho-D-ribosyl)imidazole from N(2)-formyl-N(1)-(5-phospho-D-ribosyl)glycinamide: step 1/2. Part of the phosphoribosylformylglycinamidine synthase complex involved in the purines biosynthetic pathway. Catalyzes the ATP-dependent conversion of formylglycinamide ribonucleotide (FGAR) and glutamine to yield formylglycinamidine ribonucleotide (FGAM) and glutamate. The FGAM synthase complex is composed of three subunits. PurQ produces an ammonia molecule by converting glutamine to glutamate. PurL transfers the ammonia molecule to FGAR to form FGAM in an ATP-dependent manner. PurS interacts with PurQ and PurL and is thought to assist in the transfer of the ammonia molecule from PurQ to PurL. This is Phosphoribosylformylglycinamidine synthase subunit PurL from Lactococcus lactis subsp. cremoris (strain SK11).